The chain runs to 172 residues: Shikimate kinase (172 aa).

14 to 19 (GAGKST) contacts ATP. Residue serine 18 coordinates Mg(2+). Aspartate 36, arginine 60, and glycine 82 together coordinate substrate. Arginine 120 contributes to the ATP binding site. Arginine 139 lines the substrate pocket. Glutamine 156 contributes to the ATP binding site.

Belongs to the shikimate kinase family. Monomer. Requires Mg(2+) as cofactor.

It localises to the cytoplasm. It carries out the reaction shikimate + ATP = 3-phosphoshikimate + ADP + H(+). Its pathway is metabolic intermediate biosynthesis; chorismate biosynthesis; chorismate from D-erythrose 4-phosphate and phosphoenolpyruvate: step 5/7. Functionally, catalyzes the specific phosphorylation of the 3-hydroxyl group of shikimic acid using ATP as a cosubstrate. This chain is Shikimate kinase, found in Vibrio vulnificus (strain CMCP6).